The chain runs to 414 residues: Imidazolonepropionase (414 aa).

The Fe(3+) site is built by His-73 and His-75. Zn(2+) contacts are provided by His-73 and His-75. 4-imidazolone-5-propanoate-binding residues include Arg-82, Tyr-145, and His-178. Tyr-145 provides a ligand contact to N-formimidoyl-L-glutamate. His-249 contributes to the Fe(3+) binding site. Residue His-249 coordinates Zn(2+). Gln-252 is a 4-imidazolone-5-propanoate binding site. Position 324 (Asp-324) interacts with Fe(3+). Asp-324 provides a ligand contact to Zn(2+). Residues Asn-326 and Gly-328 each coordinate N-formimidoyl-L-glutamate. Ser-329 provides a ligand contact to 4-imidazolone-5-propanoate.

This sequence belongs to the metallo-dependent hydrolases superfamily. HutI family. Zn(2+) is required as a cofactor. The cofactor is Fe(3+).

Its subcellular location is the cytoplasm. The enzyme catalyses 4-imidazolone-5-propanoate + H2O = N-formimidoyl-L-glutamate. The protein operates within amino-acid degradation; L-histidine degradation into L-glutamate; N-formimidoyl-L-glutamate from L-histidine: step 3/3. Catalyzes the hydrolytic cleavage of the carbon-nitrogen bond in imidazolone-5-propanoate to yield N-formimidoyl-L-glutamate. It is the third step in the universal histidine degradation pathway. This Shewanella pealeana (strain ATCC 700345 / ANG-SQ1) protein is Imidazolonepropionase.